We begin with the raw amino-acid sequence, 334 residues long: 6-phosphogluconolactonase (334 aa).

This sequence belongs to the cycloisomerase 2 family.

The catalysed reaction is 6-phospho-D-glucono-1,5-lactone + H2O = 6-phospho-D-gluconate + H(+). It participates in carbohydrate degradation; pentose phosphate pathway; D-ribulose 5-phosphate from D-glucose 6-phosphate (oxidative stage): step 2/3. Functionally, catalyzes the hydrolysis of 6-phosphogluconolactone to 6-phosphogluconate. In Yersinia pseudotuberculosis serotype IB (strain PB1/+), this protein is 6-phosphogluconolactonase.